Consider the following 565-residue polypeptide: CTP synthase (565 aa).

The segment at 1–272 (MARPKNVKHI…DLRVMKKLGL (272 aa)) is amidoligase domain. CTP is bound at residue Ser18. Position 18 (Ser18) interacts with UTP. An ATP-binding site is contributed by 19-24 (SLGKGI). Tyr59 provides a ligand contact to L-glutamine. Residue Asp76 participates in ATP binding. Mg(2+) is bound by residues Asp76 and Glu146. Residues 153–155 (DIE), 193–198 (KTKPTQ), and Lys229 contribute to the CTP site. Residues 193–198 (KTKPTQ) and Lys229 each bind UTP. A Glutamine amidotransferase type-1 domain is found at 299–543 (TIGVCGKYTE…VAAAKEYEKG (245 aa)). Gly363 contributes to the L-glutamine binding site. Cys390 serves as the catalytic Nucleophile; for glutamine hydrolysis. Residues 391–394 (LGMQ), Glu414, and Arg471 each bind L-glutamine. Active-site residues include His516 and Glu518.

This sequence belongs to the CTP synthase family. Homotetramer.

It catalyses the reaction UTP + L-glutamine + ATP + H2O = CTP + L-glutamate + ADP + phosphate + 2 H(+). The enzyme catalyses L-glutamine + H2O = L-glutamate + NH4(+). The catalysed reaction is UTP + NH4(+) + ATP = CTP + ADP + phosphate + 2 H(+). It participates in pyrimidine metabolism; CTP biosynthesis via de novo pathway; CTP from UDP: step 2/2. Allosterically activated by GTP, when glutamine is the substrate; GTP has no effect on the reaction when ammonia is the substrate. The allosteric effector GTP functions by stabilizing the protein conformation that binds the tetrahedral intermediate(s) formed during glutamine hydrolysis. Inhibited by the product CTP, via allosteric rather than competitive inhibition. Its function is as follows. Catalyzes the ATP-dependent amination of UTP to CTP with either L-glutamine or ammonia as the source of nitrogen. Regulates intracellular CTP levels through interactions with the four ribonucleotide triphosphates. This Chlorobium phaeobacteroides (strain DSM 266 / SMG 266 / 2430) protein is CTP synthase.